The sequence spans 539 residues: Putative cysteine ligase BshC (539 aa).

The stretch at 249 to 270 (VETNDEVTNRLNESQAAMKRAG) forms a coiled coil.

It belongs to the BshC family.

Functionally, involved in bacillithiol (BSH) biosynthesis. May catalyze the last step of the pathway, the addition of cysteine to glucosamine malate (GlcN-Mal) to generate BSH. In Bacillus pumilus (strain SAFR-032), this protein is Putative cysteine ligase BshC.